Consider the following 271-residue polypeptide: Protein FAM110D (271 aa).

A compositionally biased stretch (polar residues) spans 1-13 (MLLSSPTTPSRGR). 3 disordered regions span residues 1 to 84 (MLLS…PDSL), 118 to 149 (DAAP…TGKR), and 186 to 242 (PQSW…GRPT).

The protein belongs to the FAM110 family.

In Mus musculus (Mouse), this protein is Protein FAM110D.